The chain runs to 335 residues: Calcium/calmodulin-dependent protein kinase type I (335 aa).

Residues Y31–L291 form the Protein kinase domain. L37 to V45 contributes to the ATP binding site. The active-site Proton acceptor is the D154. T192 is modified (phosphothreonine; by autocatalysis). Positions N310 to K334 are calmodulin-binding.

Belongs to the protein kinase superfamily. CAMK Ser/Thr protein kinase family. CaMK subfamily.

It is found in the cytoplasm. The catalysed reaction is L-seryl-[protein] + ATP = O-phospho-L-seryl-[protein] + ADP + H(+). It catalyses the reaction L-threonyl-[protein] + ATP = O-phospho-L-threonyl-[protein] + ADP + H(+). Its function is as follows. Important in cell cycle regulation. This is Calcium/calmodulin-dependent protein kinase type I (cmk1) from Schizosaccharomyces pombe (strain 972 / ATCC 24843) (Fission yeast).